We begin with the raw amino-acid sequence, 224 residues long: MASSGLSSRRSIMASRLTASAEAVNEPRRGAVVSRRVEYDEESLAGAGGESRYEVFINHRGVDTKRTVARLLYDRLAQAGLRGFLDNMSMRPGDRLEERIGSAIRECTVAVAIFSPSYCDSEYCLRELAMLVESRKAIIPIFYDIKPSDLLLPQAVADSEVYLPRDLERFKFALREAKHTVGITYDSATGDMAELVSAAADAVMYNMEKMETVQRRETMILSRL.

Positions 51–178 (SRYEVFINHR…RFKFALREAK (128 aa)) constitute a TIR domain. NAD(+) is bound by residues 60 to 65 (RGVDTK) and G93. Residue E127 is part of the active site.

In terms of assembly, homodimer.

The catalysed reaction is NAD(+) + H2O = ADP-D-ribose + nicotinamide + H(+). The enzyme catalyses NADP(+) + H2O = ADP-D-ribose 2'-phosphate + nicotinamide + H(+). It carries out the reaction NAD(+) = 2'cADPR + nicotinamide + H(+). Its function is as follows. An NAD(+) hydrolase (NADase). Upon activation catalyzes cleavage of NAD(+) into ADP-D-ribose (ADPR) and nicotinamide; NAD(+) cleavage triggers a defense system that promotes cell death. In addition to ADPR, also generates a cyclization variant of cyclic ADPR termed v-cADPR (2'cADPR). Also hydrolyzes NADP(+), but not other NAD(+)-related molecules. v-cADPR activates ThsA, an NAD(+) hydrolase in B.cereus (AC J8G6Z1). Probably makes 2'cADPR; the cADPR made by this protein is bound by cmTad1 (AC P0DW61) and activates ThsA from B.cereus. Boiling cmTad1 bound to the cyclic nucleotide releases 2'cADPR, strongly suggesting it is the product of this protein. This Brachypodium distachyon (Purple false brome) protein is Probable 2' cyclic ADP-D-ribose synthase BdTIR.